The primary structure comprises 362 residues: Peptide chain release factor 1 (362 aa).

At Q237 the chain carries N5-methylglutamine.

It belongs to the prokaryotic/mitochondrial release factor family. In terms of processing, methylated by PrmC. Methylation increases the termination efficiency of RF1.

Its subcellular location is the cytoplasm. In terms of biological role, peptide chain release factor 1 directs the termination of translation in response to the peptide chain termination codons UAG and UAA. This Aliivibrio fischeri (strain ATCC 700601 / ES114) (Vibrio fischeri) protein is Peptide chain release factor 1.